The primary structure comprises 293 residues: uncharacterized protein (293 aa).

Residues 65-89 adopt a coiled-coil conformation; sequence LQKYLENIKNKKLNLNKQSNNQTNN. The tract at residues 81–112 is disordered; that stretch reads KQSNNQTNNQTNNQTNNQTNNQTNNIRPQINN.

It localises to the virion. This is an uncharacterized protein from Acanthamoeba polyphaga mimivirus (APMV).